Reading from the N-terminus, the 282-residue chain is Methyltransferase tpcH (282 aa).

This sequence belongs to the class I-like SAM-binding methyltransferase superfamily. Specifically expressed in conidia.

It participates in secondary metabolite biosynthesis. Its function is as follows. Methyltransferase; part of the gene cluster that mediates the biosynthesis of trypacidin, a mycotoxin with antiprotozoal activity and that plays a role in the infection process. The pathway begins with the synthesis of atrochrysone thioester by the polyketide synthase (PKS) tpcC. The atrochrysone carboxyl ACP thioesterase tpcB then breaks the thioester bond and releases the atrochrysone carboxylic acid from tpcC. The decarboxylase tpcK converts atrochrysone carboxylic acid to atrochrysone which is further reduced into emodin anthrone. The next step is performed by the emodin anthrone oxygenase tpcL that catalyzes the oxidation of emodinanthrone to emodin. Emodin O-methyltransferase encoded by tpcA catalyzes methylation of the 8-hydroxy group of emodin to form questin. Ring cleavage of questin by questin oxidase tpcI leads to desmethylsulochrin via several intermediates including questin epoxide. Another methylation step catalyzed by tpcM leads to the formation of sulochrin which is further converted to monomethylsulfochrin by tpcH. Finally, the tpcJ catalyzes the conversion of monomethylsulfochrin to trypacidin. Trypacidin is toxic for human pulmonary and bronchial epithelial cells by initiating the intracellular formation of nitric oxide (NO) and hydrogen peroxide (H(2)O(2)), thus triggering host necrotic cell death. The trypacidin pathway is also able to produce endocrocin via a distinct route from the endocrocin Enc pathway. This Aspergillus fumigatus (strain ATCC MYA-4609 / CBS 101355 / FGSC A1100 / Af293) (Neosartorya fumigata) protein is Methyltransferase tpcH.